Here is a 470-residue protein sequence, read N- to C-terminus: Properdin (470 aa).

The first 26 residues, 1 to 26 (MTAPVQVPQSLLLLLMLLLTLPATGS), serve as a signal peptide directing secretion. 7 consecutive TSP type-1 domains span residues 27–75 (DPVL…QACR), 76–133 (SPRW…QCCP), 135–190 (MGGW…QVCP), 192–254 (HGAW…PPCP), 256–312 (AGGW…VPCP), 314–376 (DGEW…QNCI), and 380–463 (KGSW…PACK). Intrachain disulfides connect Cys-31–Cys-55, Cys-42–Cys-71, and Cys-56–Cys-74. Residues Trp-82 and Trp-85 are each glycosylated (C-linked (Man) tryptophan). 7 disulfide bridges follow: Cys-88–Cys-126, Cys-92–Cys-132, Cys-103–Cys-110, Cys-131–Cys-169, Cys-147–Cys-183, Cys-151–Cys-189, and Cys-162–Cys-173. Trp-138, Trp-141, and Trp-144 each carry a C-linked (Man) tryptophan glycan. The O-linked (Fuc...) threonine glycan is linked to Thr-150. 3 C-linked (Man) tryptophan glycosylation sites follow: Trp-195, Trp-198, and Trp-201. 3 disulfide bridges follow: Cys-204-Cys-247, Cys-208-Cys-253, and Cys-223-Cys-237. The O-linked (Fuc...) serine glycan is linked to Ser-207. C-linked (Man) tryptophan glycosylation is found at Trp-259 and Trp-262. 3 disulfides stabilise this stretch: Cys-268-Cys-305, Cys-272-Cys-311, and Cys-283-Cys-295. Thr-271 is a glycosylation site (O-linked (Fuc...) threonine). Trp-320 and Trp-323 each carry a C-linked (Man) tryptophan glycan. 3 cysteine pairs are disulfide-bonded: Cys-326-Cys-369, Cys-336-Cys-375, and Cys-349-Cys-359. Positions 350–358 (KGRKFNGQR) are interaction with Complement C3 beta chain. Trp-383, Trp-386, and Trp-389 each carry a C-linked (Man) tryptophan glycan. Cystine bridges form between Cys-392–Cys-456, Cys-396–Cys-462, and Cys-408–Cys-440. The N-linked (GlcNAc...) asparagine glycan is linked to Asn-429.

In terms of assembly, in plasma, properdin exists as dimers, trimers or tetramers in the relative proportions of 26:54:20. Interacts with the pro-C3-convertase enzyme complex (C3b-Bb) comprised of Complement C3 beta chain (C3b) and the Complement factor B Bb fragment (Bb), where it binds (via its TSP type-1 5 domain) with C3b and Bb. This interaction stabilizes the complex and allows it to become the active C3-convertase enzyme complex (C3b-Bb-FP). Interacts with C3b. Interacts with CFB.

The protein localises to the secreted. In terms of biological role, a positive regulator of the alternate pathway of complement. It binds to and stabilizes the C3- and C5-convertase enzyme complexes. Inhibits CFI-CFH mediated degradation of Inhibits CFI-CFH mediated degradation of Complement C3 beta chain (C3b). The chain is Properdin (CFP) from Cavia porcellus (Guinea pig).